A 159-amino-acid chain; its full sequence is Transcription antitermination protein NusB (159 aa).

This sequence belongs to the NusB family.

In terms of biological role, involved in transcription antitermination. Required for transcription of ribosomal RNA (rRNA) genes. Binds specifically to the boxA antiterminator sequence of the ribosomal RNA (rrn) operons. The chain is Transcription antitermination protein NusB from Xanthomonas campestris pv. campestris (strain 8004).